A 172-amino-acid chain; its full sequence is B-box zinc finger protein 18 (172 aa).

8 residues coordinate Zn(2+): Cys5, Cys8, Cys28, His33, Cys56, Cys59, Cys79, and His84. The B box-type 1; atypical zinc-finger motif lies at 5 to 47; it reads CDACESAAAIVFCAADEAALCCSCDEKVHKCNKLASRHLRVGL. The B box-type 2; atypical zinc finger occupies 56–96; that stretch reads CDICENAPAFFYCEIDGSSLCLQCDMVVHVGGKRTHRRFLL. The tract at residues 119–172 is disordered; it reads QKASSGRGQESNGNGDHDHNMIDLNSNPQRVHEPGSHNQEEGIDVNNANNHEHE. Residues 120–132 are compositionally biased toward polar residues; the sequence is KASSGRGQESNGN. The segment covering 148–158 has biased composition (basic and acidic residues); that stretch reads RVHEPGSHNQE.

Expressed in vasculature of leaves and petioles.

It localises to the nucleus. Its function is as follows. Acts as a negative regulator of seedling photomorphogenesis. Acts as a negative regulator of blue light-mediated inhibition of hypocotyl elongation through increase of bioactive gibberellin levels. Acts as a repressor of thermotolerance by modulating expression of a set of heat shock-responsive genes. This chain is B-box zinc finger protein 18, found in Arabidopsis thaliana (Mouse-ear cress).